Here is a 1402-residue protein sequence, read N- to C-terminus: DNA-directed RNA polymerase subunit beta' (1402 aa).

Zn(2+) is bound by residues Cys71, Cys73, Cys86, and Cys89. Residues Asp462, Asp464, and Asp466 each contribute to the Mg(2+) site. Positions 811, 885, 892, and 895 each coordinate Zn(2+).

This sequence belongs to the RNA polymerase beta' chain family. In terms of assembly, the RNAP catalytic core consists of 2 alpha, 1 beta, 1 beta' and 1 omega subunit. When a sigma factor is associated with the core the holoenzyme is formed, which can initiate transcription. Mg(2+) is required as a cofactor. Zn(2+) serves as cofactor.

The catalysed reaction is RNA(n) + a ribonucleoside 5'-triphosphate = RNA(n+1) + diphosphate. Functionally, DNA-dependent RNA polymerase catalyzes the transcription of DNA into RNA using the four ribonucleoside triphosphates as substrates. The polypeptide is DNA-directed RNA polymerase subunit beta' (Rhizobium etli (strain ATCC 51251 / DSM 11541 / JCM 21823 / NBRC 15573 / CFN 42)).